A 234-amino-acid chain; its full sequence is Glucosamine-6-phosphate deaminase (234 aa).

Asp-63 serves as the catalytic Proton acceptor; for enolization step. Asn-129 acts as the For ring-opening step in catalysis. His-131 acts as the Proton acceptor; for ring-opening step in catalysis. The active-site For ring-opening step is Glu-136.

This sequence belongs to the glucosamine/galactosamine-6-phosphate isomerase family. NagB subfamily.

It carries out the reaction alpha-D-glucosamine 6-phosphate + H2O = beta-D-fructose 6-phosphate + NH4(+). Its pathway is amino-sugar metabolism; N-acetylneuraminate degradation; D-fructose 6-phosphate from N-acetylneuraminate: step 5/5. Catalyzes the reversible isomerization-deamination of glucosamine 6-phosphate (GlcN6P) to form fructose 6-phosphate (Fru6P) and ammonium ion. The chain is Glucosamine-6-phosphate deaminase from Listeria monocytogenes serotype 4b (strain CLIP80459).